An 88-amino-acid chain; its full sequence is LYR motif-containing protein 2 (88 aa).

The transit peptide at Met-1–Arg-19 directs the protein to the mitochondrion.

This sequence belongs to the complex I LYR family.

The protein localises to the mitochondrion. Involved in efficient integration of the N-module into mitochondrial respiratory chain complex I. In Rattus norvegicus (Rat), this protein is LYR motif-containing protein 2 (Lyrm2).